A 430-amino-acid chain; its full sequence is Adenylosuccinate synthetase (430 aa).

GTP-binding positions include G12–K18 and G40–T42. Catalysis depends on D13, which acts as the Proton acceptor. Residues D13 and G40 each coordinate Mg(2+). IMP-binding positions include D13 to K16, N38 to H41, T128, R142, Q223, T238, and R302. Residue H41 is the Proton donor of the active site. T298–R304 contacts substrate. GTP is bound by residues R304, S330–D332, and S412–G414.

It belongs to the adenylosuccinate synthetase family. As to quaternary structure, homodimer. The cofactor is Mg(2+).

Its subcellular location is the cytoplasm. It catalyses the reaction IMP + L-aspartate + GTP = N(6)-(1,2-dicarboxyethyl)-AMP + GDP + phosphate + 2 H(+). The protein operates within purine metabolism; AMP biosynthesis via de novo pathway; AMP from IMP: step 1/2. In terms of biological role, plays an important role in the de novo pathway of purine nucleotide biosynthesis. Catalyzes the first committed step in the biosynthesis of AMP from IMP. In Streptococcus pyogenes serotype M4 (strain MGAS10750), this protein is Adenylosuccinate synthetase.